A 116-amino-acid polypeptide reads, in one-letter code: uncharacterized protein (116 aa).

This is an uncharacterized protein from Acidianus filamentous virus 2 (isolate Italy/Pozzuoli) (AFV-2).